We begin with the raw amino-acid sequence, 1122 residues long: RecBCD enzyme subunit RecC (1122 aa).

The protein belongs to the RecC family. In terms of assembly, heterotrimer of RecB, RecC and RecD. All subunits contribute to DNA-binding. Interacts with YgbT (Cas1). As to quaternary structure, (Microbial infection) Lambda virus GamS protein interacts with the enzyme without displacing any of the subunits.

Its activity is regulated as follows. After reacting with DNA bearing a Chi site the holoenzyme is disassembled and loses exonuclease activity, DNA unwinding and Chi-directed DNA cleavage; RecB remains complexed with ssDNA, which may prevent holoenzyme reassembly. High levels of Mg(2+) (13 mM MgCl(2+)) or incubation with DNase allow holoenzyme reassembly, suggesting it is DNA bound to RecB that prevents reassembly. With respect to regulation, (Microbial infection) RecBCD is inhibited by the lambda virus gam protein (both GamL and GamS isoforms); in vitro a short preincubation prior to adding DNA results in maximal inhibition. A helicase/nuclease that prepares dsDNA breaks (DSB) for recombinational DNA repair. Binds to DSBs and unwinds DNA via a rapid (&gt;1 kb/second) and highly processive (&gt;30 kb) ATP-dependent bidirectional helicase. Unwinds dsDNA until it encounters a Chi (crossover hotspot instigator, 5'-GCTGGTGG-3') sequence from the 3' direction. Cuts ssDNA a few nucleotides 3' to Chi site, by nicking one strand or switching the strand degraded (depending on the reaction conditions). The properties and activities of the enzyme are changed at Chi. The Chi-altered holoenzyme produces a long 3'-ssDNA overhang which facilitates RecA-binding to the ssDNA for homologous DNA recombination and repair. Holoenzyme degrades any linearized DNA that is unable to undergo homologous recombination. In the holoenzyme this subunit almost certainly recognizes the wild-type Chi sequence, when added to isolated RecB increases its ATP-dependent helicase processivity. The RecBC complex requires the RecD subunit for nuclease activity, but can translocate along ssDNA in both directions. The RecBCD complex does not unwind G-quadruplex DNA. The sequence is that of RecBCD enzyme subunit RecC from Escherichia coli (strain K12).